The following is an 881-amino-acid chain: Alanine--tRNA ligase (881 aa).

Positions 564, 568, 666, and 670 each coordinate Zn(2+).

Belongs to the class-II aminoacyl-tRNA synthetase family. Zn(2+) serves as cofactor.

It is found in the cytoplasm. It catalyses the reaction tRNA(Ala) + L-alanine + ATP = L-alanyl-tRNA(Ala) + AMP + diphosphate. Functionally, catalyzes the attachment of alanine to tRNA(Ala) in a two-step reaction: alanine is first activated by ATP to form Ala-AMP and then transferred to the acceptor end of tRNA(Ala). Also edits incorrectly charged Ser-tRNA(Ala) and Gly-tRNA(Ala) via its editing domain. This chain is Alanine--tRNA ligase, found in Caldicellulosiruptor saccharolyticus (strain ATCC 43494 / DSM 8903 / Tp8T 6331).